The sequence spans 219 residues: Suppressor-of-stellate-like protein (219 aa).

The tract at residues 194 to 219 (SAESPPIKVESSVSKSPSWLRNVPNF) is disordered. Positions 204 to 219 (SSVSKSPSWLRNVPNF) are enriched in polar residues.

This sequence belongs to the casein kinase 2 subunit beta family.

This chain is Suppressor-of-stellate-like protein (Ssl), found in Drosophila melanogaster (Fruit fly).